A 128-amino-acid polypeptide reads, in one-letter code: Small ribosomal subunit protein bS6 (128 aa).

The segment at 105–128 is disordered; the sequence is AKVTEEEPVEAAPEAKVETTTEEE. Basic and acidic residues predominate over residues 117-128; that stretch reads PEAKVETTTEEE.

The protein belongs to the bacterial ribosomal protein bS6 family.

Its function is as follows. Binds together with bS18 to 16S ribosomal RNA. The polypeptide is Small ribosomal subunit protein bS6 (Geotalea daltonii (strain DSM 22248 / JCM 15807 / FRC-32) (Geobacter daltonii)).